Here is a 562-residue protein sequence, read N- to C-terminus: uncharacterized protein (562 aa).

A run of 5 helical transmembrane segments spans residues Val-4–Leu-26, Gly-33–Phe-55, Ala-59–Gly-78, Leu-90–Phe-112, and Ile-159–Ala-181. 2 consecutive RCK C-terminal domains span residues Pro-207–Thr-287 and Leu-295–Gln-375. Transmembrane regions (helical) follow at residues Ile-385–Ser-402, Gly-406–Leu-428, Leu-449–Gln-471, Leu-476–His-498, Val-505–Ala-524, and Val-539–Val-561.

Belongs to the AAE transporter (TC 2.A.81) family.

The protein localises to the cell membrane. This is an uncharacterized protein from Bradyrhizobium diazoefficiens (strain JCM 10833 / BCRC 13528 / IAM 13628 / NBRC 14792 / USDA 110).